We begin with the raw amino-acid sequence, 521 residues long: Cell adhesion molecule CEACAM1 (521 aa).

The first 34 residues, 1–34 (MELASAHLHKGQVPWGGLLLTASLLASWSPATTA), serve as a signal peptide directing secretion. The region spanning 35 to 142 (EVTIEAVPPQ…QATVRFHVHP (108 aa)) is the Ig-like V-type domain. Topologically, residues 35-428 (EVTIEAVPPQ…GGLSDGAIAG (394 aa)) are extracellular. Residues 39–142 (EAVPPQVAED…QATVRFHVHP (104 aa)) form a required for homophilic binding region. N-linked (GlcNAc...) asparagine glycosylation is found at Asn-71, Asn-89, Asn-104, Asn-148, Asn-152, Asn-199, Asn-206, Asn-210, Asn-226, Asn-258, Asn-290, Asn-294, Asn-304, Asn-317, Asn-333, and Asn-375. Ig-like C2-type domains are found at residues 147-234 (PNIT…FSLN), 239-319 (PDTP…KNIT), and 323-411 (PVTQ…IKLD). Cys-167 and Cys-217 are disulfide-bonded. Cys-261 and Cys-301 are disulfide-bonded. Cys-346 and Cys-394 form a disulfide bridge. The chain crosses the membrane as a helical span at residues 429–447 (IVIGVVAGVALIAGLAYFL). The segment at 445–457 (YFLYSRKSGGGSD) is interaction with calmodulin. The interaction with FLNA stretch occupies residues 447 to 521 (LYSRKSGGGS…ETVYSEVKKK (75 aa)). Residues 448–521 (YSRKSGGGSD…ETVYSEVKKK (74 aa)) are Cytoplasmic-facing. Residues 455-521 (GSDQRDLTEH…ETVYSEVKKK (67 aa)) are disordered. A compositionally biased stretch (basic and acidic residues) spans 457–466 (DQRDLTEHKP). Residues 467–481 (STSNHNLAPSDNSPN) show a composition bias toward polar residues. A required for interaction with PTPN11 and PTPN6 and for control of phosphorylation level region spans residues 484 to 521 (DDVAYTVLNFNSQQPNRPTSAPSSPRATETVYSEVKKK). Tyr-488 is modified (phosphotyrosine; by SRC, LCK, INSR and EGFR). The span at 491 to 514 (LNFNSQQPNRPTSAPSSPRATETV) shows a compositional bias: polar residues. Ser-503 carries the phosphoserine modification. Tyr-515 carries the post-translational modification Phosphotyrosine; by INSR, SRC and LCK. Positions 515 to 518 (YSEV) are essential for interaction with PTPN11 and PTPN6.

This sequence belongs to the immunoglobulin superfamily. CEA family. As to quaternary structure, (Microbial infection) Interacts with MHV S1 spike glycoprotein. In terms of assembly, monomer. Oligomer. Heterodimer. Homodimer. Cis-dimer/oligomer (via Ig-like C2-type and/or via cytoplasmic domains); induced by trans-homophilic cell adhesion through an allosteric mechanism transmitted by the Ig-like V-type domain, and is regulated by intracellular calcium and calmodulin. Interacts (via cytoplasmic domain) with calmodulin in a calcium dependent manner; reduces homophilic cell adhesion through dissociation of dimer. Isoform 1 interacts (via cytoplasmic domain) with PTPN11 (preferentially) and PTPN6; cis-homodimer form is preferred; this interaction is decreased by formation of isoform 1 / isoform 2 cis-heterodimers and is dependent on the monomer/dimer equilibrium; this interaction is phosphorylation-dependent. Isoform 1 interacts with LYN. Isoform 1 interacts (via cytoplasmic domain) with SRC (via SH2 domain); this interaction is regulated by trans-homophilic cell adhesion. Isoform 1 interacts with LCK; mediates phosphorylation at Tyr-488 and Tyr-515 resulting in PTPN6 association. Isoform 1 interacts with PTPN6; this interaction is phosphorylation-dependent and causes a profound decrease in TCR stimulation-induced CD247 and ZAP70 phosphorylation. Isoform 1 interacts with TCR/CD3 complex through TCR beta chain and CD3E; colocalizes at the cell surface and upon stimulation of the TCR/CD3 complex recruits PTPN6 in the TCR/CD3 complex, resulting in dephosphorylation of CD247 and ZAP70. Isoform 1 interacts (via cytoplasmic domain) with SHC1 (via SH2 domain); SHC1 mediates interaction with INSR or EGFR in a Ser-503 phosphorylation-dependent manner. Isoform 1 interacts with EGFR; the interaction is indirect. Isoform 1 interacts with CSF3R; down-regulates the CSF3R-STAT3 pathway through recruitment of PTPN6 that dephosphorylates CSF3R. Isoform 1 (phosphorylated form) interacts with TLR4 and SYK; recruits PTPN6 that dephosphorylates SYK, reducing the production of reactive oxygen species (ROS) and lysosome disruption, leading to a reduction of the inflammasome activity. Isoform 1 interacts with FLNA; inhibits cell migration and cell scattering by interfering with the interaction of FLNA with RALA. Isoform 1 interacts (via cytoplasmic domain) with PXN; the interaction is phosphotyrosyl-dependent. Isoform 1 interacts with KLRK1; recruits PTPN6 that dephosphorylates VAV1. Isoform 1 interacts with CEACAM8. Isoform 1 interacts with FASN; this interaction is insulin and phosphorylation-dependent; reduces fatty-acid synthase activity. Interacts (via Ig-like V-type) with HAVCR2 (via Ig-like V-type); facilitates the maturation and cell surface expression of HAVCR2 thereby regulating T-cell tolerance induction. Isoform 2 interacts (via the cytoplasmic domain) with ANXA2; this interaction is regulated by phosphorylation and appears in the AIIt complex. Interacts (via Lewis X moieties) with CD209 (via C-type lectin domain); this interaction is regulated by the glycosylation pattern of CEACAM1 on cell types and regulates contact between dendritic cells and neutrophils. Post-translationally, phosphorylated on serine and tyrosine. Isoform 1 is phosphorylated on tyrosine by Src family kinases like SRC and LCK and by receptor like CSF3R, EGFR and INSR upon stimulation. Phosphorylated at Ser-503; mediates activity. Phosphorylated at Tyr-488; regulates activity. Phosphorylated at Tyr-488 by EGFR and INSR upon stimulation; this phosphorylation is Ser-503-phosphorylation-dependent; mediates cellular internalization; increases interaction with FASN. Phosphorylated at Tyr-488 and Tyr-515 by LCK; mediates PTPN6 association and is regulated by homophilic ligation of CEACAM1 in the absence of T-cell activation. Phosphorylated at Tyr-515; mediates interaction with PTPN11. Phosphorylated on serine and threonine. As to expression, expressed in granulocytes, lymphocytes, granulocytes, B cells, and T-cells. Expressed in bone. Highly expressed in liver and femur. Highly expressed in neutrophils, and to a lesser extent inmonocytes, and macrophages. Slightly higher expressed in peripheral blood neutrophils (PBNs). Intestinal T-cells predominantly express isoform 2 while extraintestinal T-cells mainly express isoform 1. Expressed in small intestine and colon.

The protein localises to the cell membrane. It is found in the lateral cell membrane. Its subcellular location is the apical cell membrane. It localises to the basal cell membrane. The protein resides in the cell junction. The protein localises to the adherens junction. It is found in the cytoplasmic vesicle. Its subcellular location is the secretory vesicle. It localises to the cell projection. The protein resides in the microvillus membrane. Its function is as follows. Cell adhesion protein that mediates homophilic cell adhesion in a calcium-independent manner. Plays a role as coinhibitory receptor in immune response, insulin action and also functions as an activator during angiogenesis. Its coinhibitory receptor function is phosphorylation- and PTPN6 -dependent, which in turn, suppress signal transduction of associated receptors by dephosphorylation of their downstream effectors. Plays a role in immune response, of T-cells, natural killer (NK) and neutrophils. Upon TCR/CD3 complex stimulation, inhibits TCR-mediated cytotoxicity by blocking granule exocytosis by mediating homophilic binding to adjacent cells, allowing interaction with and phosphorylation by LCK and interaction with the TCR/CD3 complex which recruits PTPN6 resulting in dephosphorylation of CD247 and ZAP70. Also inhibits T-cell proliferation and cytokine production through inhibition of JNK cascade and plays a crucial role in regulating autoimmunity and anti-tumor immunity by inhibiting T-cell through its interaction with HAVCR2. Upon natural killer (NK) cells activation, inhibit KLRK1-mediated cytolysis of CEACAM1-bearing tumor cells by trans-homophilic interactions with CEACAM1 on the target cell and lead to cis-interaction between CEACAM1 and KLRK1, allowing PTPN6 recruitment and then VAV1 dephosphorylation. Upon neutrophils activation negatively regulates IL1B production by recruiting PTPN6 to a SYK-TLR4-CEACAM1 complex, that dephosphorylates SYK, reducing the production of reactive oxygen species (ROS) and lysosome disruption, which in turn, reduces the activity of the inflammasome. Down-regulates neutrophil production by acting as a coinhibitory receptor for CSF3R by downregulating the CSF3R-STAT3 pathway through recruitment of PTPN6 that dephosphorylates CSF3R. Also regulates insulin action by promoting INS clearance and regulating lipogenesis in liver through regulating insulin signaling. Upon INS stimulation, undergoes phosphorylation by INSR leading to INS clearance by increasing receptor-mediated insulin endocytosis. This inernalization promotes interaction with FASN leading to receptor-mediated insulin degradation and to reduction of FASN activity leading to negative regulation of fatty acid synthesis. INSR-mediated phosphorylation also provokes a down-regulation of cell proliferation through SHC1 interaction resulting in decrease coupling of SHC1 to the MAPK3/ERK1-MAPK1/ERK2 and phosphatidylinositol 3-kinase pathways. Functions as activator in angiogenesis by promoting blood vessel remodeling through endothelial cell differentiation and migration and in arteriogenesis by increasing the number of collateral arteries and collateral vessel calibers after ischemia. Also regulates vascular permeability through the VEGFR2 signaling pathway resulting in control of nitric oxide production. Down-regulates cell growth in response to EGF through its interaction with SHC1 that mediates interaction with EGFR resulting in decrease coupling of SHC1 to the MAPK3/ERK1-MAPK1/ERK2 pathway. Negatively regulates platelet aggregation by decreasing platelet adhesion on type I collagen through the GPVI-FcRgamma complex. Inhibits cell migration and cell scattering through interaction with FLNA; interferes with the interaction of FLNA with RALA. Mediates bile acid transport activity in a phosphorylation dependent manner. Negatively regulates osteoclastogenesis. Cell adhesion protein that mediates homophilic cell adhesion in a calcium-independent manner. Promotes populations of T-cells regulating IgA production and secretion associated with control of the commensal microbiota and resistance to enteropathogens. In terms of biological role, (Microbial infection) In case of murine coronavirus (MHV) infection, serves as receptor for MHV S1 spike glycoprotein. This Mus musculus (Mouse) protein is Cell adhesion molecule CEACAM1.